The sequence spans 213 residues: MDIAGYLSFFFASFTTLFIIIDPPGNLPIFIALTERFSDEYREKISKRATIIAFLILFITMVTGGKILDYFGVSISSLKIAGGILLFISSVDILLGGTRREAYKRRAEESIDVDSIAVFPLALPLYTGPGAITAGIVLYSQAGDVVMKLLVVLSAALVYSIVRLSHIYSAPIIRLLGRSGADIAARILAIFLAAIAVEFVFDGLAEKLVSMDL.

6 helical membrane-spanning segments follow: residues 1–21 (MDIA…FIII), 51–71 (IIAF…LDYF), 75–95 (ISSL…DILL), 118–138 (VFPL…GIVL), 142–162 (AGDV…YSIV), and 181–201 (ADIA…EFVF).

This sequence belongs to the UPF0056 (MarC) family.

It is found in the cell membrane. The chain is UPF0056 membrane protein AF_2111 from Archaeoglobus fulgidus (strain ATCC 49558 / DSM 4304 / JCM 9628 / NBRC 100126 / VC-16).